The primary structure comprises 744 residues: Endonuclease MutS2 (744 aa).

Residue 315–322 coordinates ATP; it reads GPNMGGKT. The region spanning 668–743 is the Smr domain; it reads VDLRGLTVAE…GHGVTVVALR (76 aa).

It belongs to the DNA mismatch repair MutS family. MutS2 subfamily. As to quaternary structure, homodimer. Interacts with MutL. Binds to stalled ribosomes, contacting rRNA.

With respect to regulation, nuclease activity is stimulated by interaction with MutL. ATPase activity is stimulated by dsDNA. Its function is as follows. Endonuclease that is involved in the suppression of homologous recombination and may thus have a key role in the control of bacterial genetic diversity. Cleaves the phosphate backbone of oligodeoxynucleotides non-sequence-specifically at the 3' side of the phosphates. Preferably incises the branched DNA structures, especially the D-loop structure over the Holliday junction. Has ATPase activity. Binds to dsDNA but not to ssDNA. Functionally, acts as a ribosome collision sensor, splitting the ribosome into its 2 subunits. Detects stalled/collided 70S ribosomes which it binds and splits by an ATP-hydrolysis driven conformational change. Acts upstream of the ribosome quality control system (RQC), a ribosome-associated complex that mediates the extraction of incompletely synthesized nascent chains from stalled ribosomes and their subsequent degradation. Probably generates substrates for RQC. The chain is Endonuclease MutS2 from Thermus thermophilus (strain ATCC 27634 / DSM 579 / HB8).